The chain runs to 237 residues: BTB/POZ domain-containing protein KCTD6 (237 aa).

The tract at residues 1–104 is interaction with ANK1 isoform Mu7; sequence MDNGDWGYMM…FYQIEPLIQC (104 aa). Positions 10 to 110 are interaction with CUL3; that stretch reads MSDPVTLNVG…LIQCLNDPRP (101 aa). Positions 12 to 81 constitute a BTB domain; that stretch reads DPVTLNVGGH…LRTSELTLPL (70 aa). Residues 113-187 form an interaction with USP21 region; sequence PMDTFEEVVE…TFGPCDYHQE (75 aa).

As to quaternary structure, homopentamer. Interacts with KCTD11; KCTD6 and KCTD11 may associate in heteropentameric assemblies. Interacts (via BTB domain) with CUL3; initially a 4:4 stoichiometry has been reported, however, electron microscopy revealed pentameric states with a five-pointed pinwheel shape. The interaction with CUL3 is indicative for a participation in a BCR (BTB-CUL3-RBX1) E3 ubiquitin-protein ligase complex. Interacts with HDAC1; probably indirect as the interaction requires the presence of KCTD11. Interacts with USP21 (preferentially catalytic inactive form). Interacts with ANK1 isoform Mu7; detected in striated muscle. Interacts with USP11. As to expression, highly expressed in cerebellum and brain.

It localises to the cytoplasm. Its subcellular location is the myofibril. It is found in the sarcomere. The protein localises to the m line. The protein operates within protein modification; protein ubiquitination. Probable substrate-specific adapter of a BCR (BTB-CUL3-RBX1) E3 ubiquitin-protein ligase complex mediating the ubiquitination and subsequent proteasomal degradation of target proteins. Promotes the ubiquitination of HDAC1; the function seems to depend on KCTD11:KCTD6 oligomerization. Can function as antagonist of the Hedgehog pathway by affecting the nuclear transfer of transcription factor GLI1; the function probably occurs via HDAC1 down-regulation, keeping GLI1 acetylated and inactive. Inhibits cell growth and tumorigenicity of medulloblastoma (MDB). Involved in regulating protein levels of ANK1 isoform Mu7 probably implicating CUL3-dependent proteasomal degradation. In Mus musculus (Mouse), this protein is BTB/POZ domain-containing protein KCTD6 (Kctd6).